A 989-amino-acid polypeptide reads, in one-letter code: Phosphoenolpyruvate carboxylase (989 aa).

Residues histidine 175 and lysine 630 contribute to the active site.

It belongs to the PEPCase type 1 family. The cofactor is Mg(2+).

It carries out the reaction oxaloacetate + phosphate = phosphoenolpyruvate + hydrogencarbonate. Forms oxaloacetate, a four-carbon dicarboxylic acid source for the tricarboxylic acid cycle. The polypeptide is Phosphoenolpyruvate carboxylase (Prochlorococcus marinus subsp. pastoris (strain CCMP1986 / NIES-2087 / MED4)).